A 157-amino-acid polypeptide reads, in one-letter code: 2-C-methyl-D-erythritol 2,4-cyclodiphosphate synthase (157 aa).

2 residues coordinate a divalent metal cation: Asp-8 and His-10. 4-CDP-2-C-methyl-D-erythritol 2-phosphate contacts are provided by residues 8-10 and 34-35; these read DVH and HS. A divalent metal cation is bound at residue His-42. Residues 56 to 58, 61 to 65, 100 to 106, 132 to 135, Phe-139, and Arg-142 each bind 4-CDP-2-C-methyl-D-erythritol 2-phosphate; these read DIG, FPDTD, AQAPKMA, and TTTE.

The protein belongs to the IspF family. As to quaternary structure, homotrimer. The cofactor is a divalent metal cation.

The catalysed reaction is 4-CDP-2-C-methyl-D-erythritol 2-phosphate = 2-C-methyl-D-erythritol 2,4-cyclic diphosphate + CMP. Its pathway is isoprenoid biosynthesis; isopentenyl diphosphate biosynthesis via DXP pathway; isopentenyl diphosphate from 1-deoxy-D-xylulose 5-phosphate: step 4/6. In terms of biological role, involved in the biosynthesis of isopentenyl diphosphate (IPP) and dimethylallyl diphosphate (DMAPP), two major building blocks of isoprenoid compounds. Catalyzes the conversion of 4-diphosphocytidyl-2-C-methyl-D-erythritol 2-phosphate (CDP-ME2P) to 2-C-methyl-D-erythritol 2,4-cyclodiphosphate (ME-CPP) with a corresponding release of cytidine 5-monophosphate (CMP). This chain is 2-C-methyl-D-erythritol 2,4-cyclodiphosphate synthase, found in Pseudomonas savastanoi pv. phaseolicola (strain 1448A / Race 6) (Pseudomonas syringae pv. phaseolicola (strain 1448A / Race 6)).